Consider the following 235-residue polypeptide: Small ribosomal subunit protein uS5 (235 aa).

The S5 DRBM domain maps to 60–123; it reads ENQEVLDIAL…NYAKMNIIEI (64 aa). 4 residues coordinate Zn(2+): cysteine 127, cysteine 132, cysteine 134, and histidine 138.

The protein belongs to the universal ribosomal protein uS5 family. As to quaternary structure, part of the 30S ribosomal subunit. Contacts protein S4. It depends on Zn(2+) as a cofactor.

Functionally, with S4 and S12 plays an important role in translational accuracy. The polypeptide is Small ribosomal subunit protein uS5 (Thermococcus kodakarensis (strain ATCC BAA-918 / JCM 12380 / KOD1) (Pyrococcus kodakaraensis (strain KOD1))).